The sequence spans 96 residues: Aspartyl/glutamyl-tRNA(Asn/Gln) amidotransferase subunit C (96 aa).

Belongs to the GatC family. Heterotrimer of A, B and C subunits.

It carries out the reaction L-glutamyl-tRNA(Gln) + L-glutamine + ATP + H2O = L-glutaminyl-tRNA(Gln) + L-glutamate + ADP + phosphate + H(+). It catalyses the reaction L-aspartyl-tRNA(Asn) + L-glutamine + ATP + H2O = L-asparaginyl-tRNA(Asn) + L-glutamate + ADP + phosphate + 2 H(+). Its function is as follows. Allows the formation of correctly charged Asn-tRNA(Asn) or Gln-tRNA(Gln) through the transamidation of misacylated Asp-tRNA(Asn) or Glu-tRNA(Gln) in organisms which lack either or both of asparaginyl-tRNA or glutaminyl-tRNA synthetases. The reaction takes place in the presence of glutamine and ATP through an activated phospho-Asp-tRNA(Asn) or phospho-Glu-tRNA(Gln). The protein is Aspartyl/glutamyl-tRNA(Asn/Gln) amidotransferase subunit C of Bacillus licheniformis (strain ATCC 14580 / DSM 13 / JCM 2505 / CCUG 7422 / NBRC 12200 / NCIMB 9375 / NCTC 10341 / NRRL NRS-1264 / Gibson 46).